The chain runs to 59 residues: Potassium channel toxin alpha-KTx 16.7 (59 aa).

Residues 1 to 22 (MKILSILLIALVICSISICTEA) form the signal peptide. 3 disulfides stabilise this stretch: C30–C51, C36–C56, and C40–C58.

This sequence belongs to the short scorpion toxin superfamily. Potassium channel inhibitor family. Alpha-KTx 16 subfamily. As to expression, expressed by the venom gland.

The protein localises to the secreted. In terms of biological role, may play a role in blocking voltage-gated potassium channels Kv1.2/KCNA2, and Kv1.3/KCNA3. Blocks the voltage-gated potassium channel Kv1.3/KCNA3, with an IC(50) of 118.3 +-55.8 nM. This Mesobuthus gibbosus (Mediterranean checkered scorpion) protein is Potassium channel toxin alpha-KTx 16.7.